The primary structure comprises 747 residues: Catalase-peroxidase (747 aa).

An N-terminal signal peptide occupies residues 1 to 27; the sequence is MRKFSVSKVALLAATMAPALLPAAARA. Residues 116 to 238 constitute a cross-link (tryptophyl-tyrosyl-methioninium (Trp-Tyr) (with M-264)); the sequence is WHSAGTYRTA…LAAVQMGLIY (123 aa). The active-site Proton acceptor is H117. Positions 238-264 form a cross-link, tryptophyl-tyrosyl-methioninium (Tyr-Met) (with W-116); the sequence is YVNPEGPNGNPDPLLAAKDIRETFGRM. H279 contacts heme b.

It belongs to the peroxidase family. Peroxidase/catalase subfamily. In terms of assembly, homodimer or homotetramer. Heme b is required as a cofactor. Post-translationally, formation of the three residue Trp-Tyr-Met cross-link is important for the catalase, but not the peroxidase activity of the enzyme.

It carries out the reaction H2O2 + AH2 = A + 2 H2O. The catalysed reaction is 2 H2O2 = O2 + 2 H2O. Functionally, bifunctional enzyme with both catalase and broad-spectrum peroxidase activity. The polypeptide is Catalase-peroxidase (Novosphingobium aromaticivorans (strain ATCC 700278 / DSM 12444 / CCUG 56034 / CIP 105152 / NBRC 16084 / F199)).